The primary structure comprises 92 residues: DLELRQCLPCGPGGKGRCFGPSICCGDELGCFVGTAEALRCQEENYLPSPCQSGQKPCGSGGRCAAAGICCNDESCVTEPECREGAGLPRRA.

Cystine bridges form between cysteine 7/cysteine 51, cysteine 10/cysteine 24, cysteine 18/cysteine 41, cysteine 25/cysteine 31, cysteine 58/cysteine 70, cysteine 64/cysteine 82, and cysteine 71/cysteine 76.

Belongs to the vasopressin/oxytocin family.

Its subcellular location is the secreted. Its function is as follows. Neurophysin 2 specifically binds the midbrain peptide hormone vasopressin. The chain is Neurophysin 2 (AVP) from Equus caballus (Horse).